Consider the following 520-residue polypeptide: GMP synthase [glutamine-hydrolyzing] (520 aa).

Residues 9–202 form the Glutamine amidotransferase type-1 domain; that stretch reads KILILDFGSQ…VRKICGCSGQ (194 aa). C86 acts as the Nucleophile in catalysis. Residues H176 and E178 contribute to the active site. Positions 203–395 constitute a GMPS ATP-PPase domain; the sequence is WTPGHIIDDA…LGLPHQMVWR (193 aa). ATP is bound at residue 230 to 236; sequence SGGVDSS.

Homodimer.

The catalysed reaction is XMP + L-glutamine + ATP + H2O = GMP + L-glutamate + AMP + diphosphate + 2 H(+). The protein operates within purine metabolism; GMP biosynthesis; GMP from XMP (L-Gln route): step 1/1. In terms of biological role, catalyzes the synthesis of GMP from XMP. The sequence is that of GMP synthase [glutamine-hydrolyzing] from Geobacter metallireducens (strain ATCC 53774 / DSM 7210 / GS-15).